The chain runs to 948 residues: Valine--tRNA ligase (948 aa).

The 'HIGH' region motif lies at 40–50 (PNVTGSLHMGH). The 'KMSKS' region motif lies at 551–555 (KMSKS). K554 contributes to the ATP binding site. Residues 879-945 (LIDKGAELAR…GKLAEQHARI (67 aa)) adopt a coiled-coil conformation.

Belongs to the class-I aminoacyl-tRNA synthetase family. ValS type 1 subfamily. As to quaternary structure, monomer.

Its subcellular location is the cytoplasm. The catalysed reaction is tRNA(Val) + L-valine + ATP = L-valyl-tRNA(Val) + AMP + diphosphate. Functionally, catalyzes the attachment of valine to tRNA(Val). As ValRS can inadvertently accommodate and process structurally similar amino acids such as threonine, to avoid such errors, it has a 'posttransfer' editing activity that hydrolyzes mischarged Thr-tRNA(Val) in a tRNA-dependent manner. This chain is Valine--tRNA ligase, found in Pseudomonas syringae pv. syringae (strain B728a).